A 497-amino-acid chain; its full sequence is Ammonium transporter 1 (497 aa).

Over 1–32 the chain is Extracellular; it reads MSSTTDATPTPSGVNGGDSMTVNLNQFYNNGD. The chain crosses the membrane as a helical span at residues 33–53; it reads VAWILTSTALVFIMIPGVGFF. The Cytoplasmic portion of the chain corresponds to 54–63; sequence YSGLARRRSA. The helical transmembrane segment at 64-84 threads the bilayer; it reads ISMLFLSMMSVAIVAFQWFFW. The Extracellular segment spans residues 85-122; that stretch reads GYSLTFSHEGGPYIGSLANFGLRQTLGRPSSGASSVPD. The chain crosses the membrane as a helical span at residues 123-143; the sequence is ILFCVFQGMFAAITPALAIGA. Residues 144–150 lie on the Cytoplasmic side of the membrane; the sequence is AADRGRM. Residues 151-171 form a helical membrane-spanning segment; that stretch reads FPCMVFMFLWTSIVYDPIAFW. The Extracellular portion of the chain corresponds to 172 to 187; the sequence is TWNPNGWLNKLGSYDF. A helical membrane pass occupies residues 188–208; that stretch reads AGGSPVHISSGMAALAYSIVI. Over 209–223 the chain is Cytoplasmic; it reads GKRCDHGTTKYRPHN. A helical membrane pass occupies residues 224–244; it reads VPHVVLGTVFLWFGWFGFNGG. Topologically, residues 245–253 are extracellular; sequence SSAAANMRG. Residues 254–274 form a helical membrane-spanning segment; sequence VMAVVVTHLAASVGGIVWCVI. Topologically, residues 275–281 are cytoplasmic; that stretch reads DFAKNRH. The helical transmembrane segment at 282–302 threads the bilayer; sequence WSVVGFCEGAVAGLVAITPGS. Position 303 (Gly-303) is a topological domain, extracellular. Residues 304-324 traverse the membrane as a helical segment; sequence FVPPWAAVVIGALGAVFCYAA. Residues 325 to 338 lie on the Cytoplasmic side of the membrane; it reads TYLKKIIRVDDALD. Residues 339–359 traverse the membrane as a helical segment; that stretch reads IFAEHGVGGMVGNILTALFAA. Topologically, residues 360–394 are extracellular; the sequence is DYIEALDGSGTAYTGGWITHHYIQLGYQLADTVSC. The helical transmembrane segment at 395–415 threads the bilayer; the sequence is AAYSFAVSCALLFVMNYIPGL. The Cytoplasmic segment spans residues 416-497; it reads SLRVSREDEV…AESEAQAPAI (82 aa). Positions 440-497 are disordered; that stretch reads YKDSTDEPPPITTSGVQYTSPTVSDSASNEKEQEHRAQNEAQKEEEYRAESEAQAPAI. Over residues 451–466 the composition is skewed to polar residues; sequence TTSGVQYTSPTVSDSA. Over residues 467 to 490 the composition is skewed to basic and acidic residues; it reads SNEKEQEHRAQNEAQKEEEYRAES.

Belongs to the ammonia transporter channel (TC 1.A.11.2) family.

The protein resides in the membrane. Functionally, transporter for ammonium to use as a nitrogen source. Under ammonium limitation acts as an ammonium sensor, generating a signal that leads to pseudohyphal growth. This Schizosaccharomyces pombe (strain 972 / ATCC 24843) (Fission yeast) protein is Ammonium transporter 1 (amt1).